The primary structure comprises 435 residues: Serine carboxypeptidase-like 16 (435 aa).

The N-terminal stretch at 1–23 is a signal peptide; that stretch reads MGSWIPKLLLLQLVLLLTKHADS. 3 disulfides stabilise this stretch: Cys82–Cys325, Cys246–Cys260, and Cys284–Cys291. Asn103 carries an N-linked (GlcNAc...) asparagine glycan. The active site involves Ser178. Asn305 carries N-linked (GlcNAc...) asparagine glycosylation. Residue Asp360 is part of the active site. Asn376 carries N-linked (GlcNAc...) asparagine glycosylation. Residue His413 is part of the active site.

This sequence belongs to the peptidase S10 family. Expressed in seedlings, roots and leaves.

The protein localises to the secreted. Functionally, probable carboxypeptidase. In Arabidopsis thaliana (Mouse-ear cress), this protein is Serine carboxypeptidase-like 16 (SCPL16).